Reading from the N-terminus, the 409-residue chain is MSSHPIQVFSEIGKLKKVMLHRPGKELENLLPDYLERLLFDDIPFLEDAQKEHDAFAQALRDEGIEVLYLEQLAAESLTSPEIRDQFIEEYLDEANIRDRQTKVAIRELLHGIKDNQELVEKTMAGIQKVELPEIPDEAKDLTDLVESDYPFAIDPMPNLYFTRDPFATIGNAVSLNHMFADTRNRETLYGKYIFKYHPIYGGKVDLVYNREEDTRIEGGDELILSKDVLAVGISQRTDAASIEKLLVNIFKKNVGFKKVLAFEFANNRKFMHLDTVFTMVDYDKFTIHPEIEGDLHVYSVTYENEKLKIVEEKGDLAELLAQNLGVEKVHLIRCGGGNIVAAAREQWNDGSNTLTIAPGVVVVYDRNTVTNKILEEYGLRLIKIRGSELVRGRGGPRCMSMPFEREEV.

Residue Cys-399 is the Amidino-cysteine intermediate of the active site.

Belongs to the arginine deiminase family.

It is found in the cytoplasm. It catalyses the reaction L-arginine + H2O = L-citrulline + NH4(+). Its pathway is amino-acid degradation; L-arginine degradation via ADI pathway; carbamoyl phosphate from L-arginine: step 1/2. The protein is Arginine deiminase of Streptococcus pneumoniae (strain 70585).